The sequence spans 759 residues: MDEADFSEDTTYKQEDLPYDGDLSPIKICNDYSFTSKNDAFEVSSQIIFIADDPQEKAMHNETCGNTAMTMPLGKTTENAANKKDEKEKQCTAALHIPANEGDASKSSISDILLHHLSKEPFLRGQGIDCETLPEISNADSFEEEAIIKSIISCCNKNSWPKEQTLELTDQLNPKKDGENSNKPGSPTMTEENTSDLEETVAAGDSSHQENVNILTKTKGPGDKQNSYQGQAPPKQHTEKASSGNRFKYGQGQVHYQLPDFSKIAPEVKNPKNNIINKPLAIAKQVSFSKLREKPAVVQDILETMPESNCVEKQHQEQKGEITEPSQQIQMEPTVHIHQELLTGIESEASISKLSPTSQKGTSSSSSYIFQKISQGKQMCQKLKEQTDQLKTKVREFSKRIKQESPYHLQDKKLVLEKLQGHLELLEQNFLATKDKHLTLQQQVHKHESTIVSDFDPERKVEGEIFKLEMLLEDVKDKVDESKYTSAPSLPVSSPVTLDDLASTSSSLSNEVPEEHPGHPPGPRGSGGSEATGTPQGGPQEAPKEELCELTPQIYLNGHYGDATVQNQPDQVAMRLSSNSGEDPRCTPGRQDCAETTAPSPSCAFCRRLLEWKPKVEKKGHRRIHCGRFSTVHEKAPHSDSTPNSDTGHSFCSDSGTEMQGNKCQDCGTKIPTSRRACRKEPPKEFHYRHNTPGENYSNHSKRGAFVRPHSLHESKNSSPSLASPFCCPGLMYSPDTSKSSPTPGWQEAELGLENMKSQ.

Positions 169–246 are disordered; that stretch reads TDQLNPKKDG…HTEKASSGNR (78 aa). Residues 181-192 are compositionally biased toward polar residues; sequence SNKPGSPTMTEE. A coiled-coil region spans residues 371–482; that stretch reads QKISQGKQMC…EDVKDKVDES (112 aa). Polar residues predominate over residues 484–496; it reads YTSAPSLPVSSPV. Disordered stretches follow at residues 484 to 543, 634 to 654, 678 to 723, and 735 to 759; these read YTSA…QEAP, EKAP…FCSD, CRKE…PSLA, and PDTS…MKSQ. Low complexity predominate over residues 497–509; the sequence is TLDDLASTSSSLS. Over residues 639–654 the composition is skewed to polar residues; sequence SDSTPNSDTGHSFCSD. The segment covering 679 to 688 has biased composition (basic and acidic residues); that stretch reads RKEPPKEFHY. Polar residues predominate over residues 735–744; the sequence is PDTSKSSPTP.

The protein belongs to the AKNA family.

This Macaca fascicularis (Crab-eating macaque) protein is Protein AKNAD1 (AKNAD1).